Reading from the N-terminus, the 329-residue chain is Capsular polysaccharide phosphotransferase WcwK (329 aa).

It belongs to the stealth family.

The polypeptide is Capsular polysaccharide phosphotransferase WcwK (wcwK) (Streptococcus pneumoniae).